Here is a 202-residue protein sequence, read N- to C-terminus: UPF0126 membrane protein YvgT (202 aa).

A run of 6 helical transmembrane segments spans residues 3 to 23, 26 to 46, 63 to 83, 90 to 110, 113 to 133, and 160 to 180; these read WELLSVIGIIAFAVSGAIVAM, EYDILGVYILGIVTAFGGGAI, AYFQIALLSITIVFLFPKLLL, GNLSDAIGLAAFAIQGALYAV, GHPLSAVIVAAVLTGSGGGII, and IVGLGWLGNSFGLYVLFFVLV.

This sequence belongs to the UPF0126 family.

It is found in the cell membrane. The chain is UPF0126 membrane protein YvgT (yvgT) from Bacillus subtilis (strain 168).